Reading from the N-terminus, the 292-residue chain is Ribosomal RNA small subunit methyltransferase I (292 aa).

The protein belongs to the methyltransferase superfamily. RsmI family.

It is found in the cytoplasm. It catalyses the reaction cytidine(1402) in 16S rRNA + S-adenosyl-L-methionine = 2'-O-methylcytidine(1402) in 16S rRNA + S-adenosyl-L-homocysteine + H(+). Its function is as follows. Catalyzes the 2'-O-methylation of the ribose of cytidine 1402 (C1402) in 16S rRNA. The chain is Ribosomal RNA small subunit methyltransferase I from Buchnera aphidicola subsp. Baizongia pistaciae (strain Bp).